We begin with the raw amino-acid sequence, 428 residues long: 3-phosphoshikimate 1-carboxyvinyltransferase (428 aa).

The 3-phosphoshikimate site is built by lysine 20, serine 21, and arginine 25. Position 20 (lysine 20) interacts with phosphoenolpyruvate. 2 residues coordinate phosphoenolpyruvate: glycine 92 and arginine 120. The 3-phosphoshikimate site is built by serine 166, glutamine 168, aspartate 314, and lysine 341. Glutamine 168 serves as a coordination point for phosphoenolpyruvate. The active-site Proton acceptor is aspartate 314. Positions 345 and 387 each coordinate phosphoenolpyruvate.

This sequence belongs to the EPSP synthase family. As to quaternary structure, monomer.

The protein resides in the cytoplasm. The catalysed reaction is 3-phosphoshikimate + phosphoenolpyruvate = 5-O-(1-carboxyvinyl)-3-phosphoshikimate + phosphate. Its pathway is metabolic intermediate biosynthesis; chorismate biosynthesis; chorismate from D-erythrose 4-phosphate and phosphoenolpyruvate: step 6/7. Functionally, catalyzes the transfer of the enolpyruvyl moiety of phosphoenolpyruvate (PEP) to the 5-hydroxyl of shikimate-3-phosphate (S3P) to produce enolpyruvyl shikimate-3-phosphate and inorganic phosphate. This is 3-phosphoshikimate 1-carboxyvinyltransferase from Listeria monocytogenes serovar 1/2a (strain ATCC BAA-679 / EGD-e).